We begin with the raw amino-acid sequence, 343 residues long: Phenylalanine--tRNA ligase alpha subunit (343 aa).

Residue Glu-268 participates in Mg(2+) binding.

Belongs to the class-II aminoacyl-tRNA synthetase family. Phe-tRNA synthetase alpha subunit type 1 subfamily. As to quaternary structure, tetramer of two alpha and two beta subunits. It depends on Mg(2+) as a cofactor.

It localises to the cytoplasm. The catalysed reaction is tRNA(Phe) + L-phenylalanine + ATP = L-phenylalanyl-tRNA(Phe) + AMP + diphosphate + H(+). The polypeptide is Phenylalanine--tRNA ligase alpha subunit (Cupriavidus taiwanensis (strain DSM 17343 / BCRC 17206 / CCUG 44338 / CIP 107171 / LMG 19424 / R1) (Ralstonia taiwanensis (strain LMG 19424))).